Reading from the N-terminus, the 253-residue chain is MRKPIIAGNWKMFKTFEEAIQFVDAVQDKLPSNEKVDAVICAPALYLPTLVQVASESELAIGAQTMHYENEGAFTGEISPAQLASVDVDYVILGHSERREYYNETDEAINKKVAAALAHNIVPIICCGETLEEREAGTTEQKVAGQIKAALAGFEAQQVEHMVIAYEPIWAIGTGKTATADDANQVCGAIRSVVEELFDAATANAVRIQYGGSVKPDNVHELLSKEHIDGALVGGASLQPESYLTLLEAAANA.

9–11 (NWK) lines the substrate pocket. Residue His95 is the Electrophile of the active site. Glu167 functions as the Proton acceptor in the catalytic mechanism. Residues Gly173, Ser213, and 234–235 (GG) each bind substrate. Ser213 bears the Phosphoserine mark.

This sequence belongs to the triosephosphate isomerase family. In terms of assembly, homodimer.

Its subcellular location is the cytoplasm. It carries out the reaction D-glyceraldehyde 3-phosphate = dihydroxyacetone phosphate. It participates in carbohydrate biosynthesis; gluconeogenesis. It functions in the pathway carbohydrate degradation; glycolysis; D-glyceraldehyde 3-phosphate from glycerone phosphate: step 1/1. Functionally, involved in the gluconeogenesis. Catalyzes stereospecifically the conversion of dihydroxyacetone phosphate (DHAP) to D-glyceraldehyde-3-phosphate (G3P). This Lysinibacillus sphaericus (strain C3-41) protein is Triosephosphate isomerase.